The sequence spans 237 residues: AA9 family lytic polysaccharide monooxygenase C (237 aa).

Residues 1 to 15 form the signal peptide; the sequence is MKVLAPLILAGAASA. Cu(2+) contacts are provided by His16 and His99. 2 cysteine pairs are disulfide-bonded: Cys54/Cys185 and Cys155/Cys237. N-linked (GlcNAc...) asparagine glycosylation occurs at Asn112. Positions 171 and 180 each coordinate O2. Tyr182 lines the Cu(2+) pocket.

The protein belongs to the polysaccharide monooxygenase AA9 family. It depends on Cu(2+) as a cofactor.

It is found in the secreted. The enzyme catalyses [(1-&gt;4)-beta-D-glucosyl]n+m + reduced acceptor + O2 = 4-dehydro-beta-D-glucosyl-[(1-&gt;4)-beta-D-glucosyl]n-1 + [(1-&gt;4)-beta-D-glucosyl]m + acceptor + H2O.. With respect to regulation, is able to utilize various natural phenolic compounds as reducing agents. Most of these reducing agents are present in plants, either free or as lignin building blocks, such as sinapic acid, or as flavonoids such as catechin and dopamine. Phenolic compounds with 1,2-benzenediol and 1,2,3-benzenetriol moieties yield the highest release of oxidized and non-oxidized glucooligosaccharides from cellulose compared to monophenols or sulfur-containing compounds. Its function is as follows. Lytic polysaccharide monooxygenase (LPMO) that depolymerizes crystalline and amorphous polysaccharides via the oxidation of scissile alpha- or beta-(1-4)-glycosidic bonds, yielding C4 oxidation products. Catalysis by LPMOs requires the reduction of the active-site copper from Cu(II) to Cu(I) by a reducing agent and H(2)O(2) or O(2) as a cosubstrate. Shows oxidative cleavage of beta-(1-3, 1-4)-glucan from oat spelt or xyloglucan from tamarind seed, in addition to cellulose. The protein is AA9 family lytic polysaccharide monooxygenase C of Thermothelomyces thermophilus (strain ATCC 42464 / BCRC 31852 / DSM 1799) (Sporotrichum thermophile).